A 314-amino-acid chain; its full sequence is Olfactory receptor 5G3 (314 aa).

Residues methionine 1 to lysine 24 lie on the Extracellular side of the membrane. An N-linked (GlcNAc...) asparagine glycan is attached at asparagine 5. A helical transmembrane segment spans residues isoleucine 25–methionine 45. Over isoleucine 46–cysteine 97 the chain is Cytoplasmic. An intrachain disulfide couples cysteine 97 to cysteine 179. A helical membrane pass occupies residues alanine 98–methionine 118. Residues alanine 119–glutamine 143 lie on the Extracellular side of the membrane. A helical transmembrane segment spans residues leucine 144 to phenylalanine 164. Over cysteine 165 to proline 167 the chain is Cytoplasmic. A helical transmembrane segment spans residues phenylalanine 168–alanine 188. Topologically, residues cysteine 189 to lysine 196 are extracellular. A helical transmembrane segment spans residues phenylalanine 197–serine 217. At tyrosine 218–alanine 237 the chain is on the cytoplasmic side. Residues phenylalanine 238–isoleucine 258 form a helical membrane-spanning segment. Residues tyrosine 259–leucine 268 are Extracellular-facing. The chain crosses the membrane as a helical span at residues glycine 269–isoleucine 289. At tyrosine 290–arginine 314 the chain is on the cytoplasmic side.

It belongs to the G-protein coupled receptor 1 family.

Its subcellular location is the cell membrane. Odorant receptor. This Homo sapiens (Human) protein is Olfactory receptor 5G3 (OR5G3).